A 992-amino-acid polypeptide reads, in one-letter code: Protein translocase subunit SecA (992 aa).

ATP is bound by residues Gln86, 104–108 (GEGKT), and Asp535. Residues 885-910 (IAGGSSEVEQTRKPQRRTVQQIGRND) form a disordered region. Cys912, Cys914, Cys923, and His924 together coordinate Zn(2+). Positions 965 to 992 (IDNGTLPAASPKTPRGRQPQAVPRGKKR) are disordered.

The protein belongs to the SecA family. In terms of assembly, monomer and homodimer. Part of the essential Sec protein translocation apparatus which comprises SecA, SecYEG and auxiliary proteins SecDF. Other proteins may also be involved. Zn(2+) serves as cofactor.

Its subcellular location is the cell membrane. The protein resides in the cytoplasm. The catalysed reaction is ATP + H2O + cellular proteinSide 1 = ADP + phosphate + cellular proteinSide 2.. Its function is as follows. Part of the Sec protein translocase complex. Interacts with the SecYEG preprotein conducting channel. Has a central role in coupling the hydrolysis of ATP to the transfer of proteins into and across the cell membrane, serving as an ATP-driven molecular motor driving the stepwise translocation of polypeptide chains across the membrane. This is Protein translocase subunit SecA from Chloroflexus aggregans (strain MD-66 / DSM 9485).